A 75-amino-acid chain; its full sequence is Exodeoxyribonuclease 7 small subunit (75 aa).

This sequence belongs to the XseB family. In terms of assembly, heterooligomer composed of large and small subunits.

The protein resides in the cytoplasm. The enzyme catalyses Exonucleolytic cleavage in either 5'- to 3'- or 3'- to 5'-direction to yield nucleoside 5'-phosphates.. In terms of biological role, bidirectionally degrades single-stranded DNA into large acid-insoluble oligonucleotides, which are then degraded further into small acid-soluble oligonucleotides. The chain is Exodeoxyribonuclease 7 small subunit from Citrifermentans bemidjiense (strain ATCC BAA-1014 / DSM 16622 / JCM 12645 / Bem) (Geobacter bemidjiensis).